A 340-amino-acid polypeptide reads, in one-letter code: Ketol-acid reductoisomerase (NADP(+)) (340 aa).

The KARI N-terminal Rossmann domain occupies 1 to 183 (MAITVYYDKD…GGGRTGIIET (183 aa)). Residues 26–29 (FGSQ), Arg49, Ser52, Ser54, and 84–87 (DEIQ) each bind NADP(+). Residue His109 is part of the active site. Residue Gly135 coordinates NADP(+). The KARI C-terminal knotted domain maps to 184-329 (TFKAETETDL…RNLRAMMPWI (146 aa)). Residues Asp192, Glu196, Glu228, and Glu232 each contribute to the Mg(2+) site. Residue Ser253 coordinates substrate.

Belongs to the ketol-acid reductoisomerase family. Mg(2+) is required as a cofactor.

The catalysed reaction is (2R)-2,3-dihydroxy-3-methylbutanoate + NADP(+) = (2S)-2-acetolactate + NADPH + H(+). It carries out the reaction (2R,3R)-2,3-dihydroxy-3-methylpentanoate + NADP(+) = (S)-2-ethyl-2-hydroxy-3-oxobutanoate + NADPH + H(+). It functions in the pathway amino-acid biosynthesis; L-isoleucine biosynthesis; L-isoleucine from 2-oxobutanoate: step 2/4. Its pathway is amino-acid biosynthesis; L-valine biosynthesis; L-valine from pyruvate: step 2/4. Its function is as follows. Involved in the biosynthesis of branched-chain amino acids (BCAA). Catalyzes an alkyl-migration followed by a ketol-acid reduction of (S)-2-acetolactate (S2AL) to yield (R)-2,3-dihydroxy-isovalerate. In the isomerase reaction, S2AL is rearranged via a Mg-dependent methyl migration to produce 3-hydroxy-3-methyl-2-ketobutyrate (HMKB). In the reductase reaction, this 2-ketoacid undergoes a metal-dependent reduction by NADPH to yield (R)-2,3-dihydroxy-isovalerate. This is Ketol-acid reductoisomerase (NADP(+)) from Campylobacter jejuni subsp. jejuni serotype O:2 (strain ATCC 700819 / NCTC 11168).